The chain runs to 64 residues: Large ribosomal subunit protein bL35 (64 aa).

Basic residues predominate over residues 1–22; the sequence is MPKMKSHTGMGKRVRVTGKGKI. Positions 1-39 are disordered; it reads MPKMKSHTGMGKRVRVTGKGKIVKQQAGLRHNLEKKPST.

The protein belongs to the bacterial ribosomal protein bL35 family.

In Salinispora arenicola (strain CNS-205), this protein is Large ribosomal subunit protein bL35.